The chain runs to 396 residues: Elongation factor Tu (396 aa).

The 197-residue stretch at 10 to 206 folds into the tr-type G domain; sequence KPHVNVGTIG…ALDSYIPTPK (197 aa). The G1 stretch occupies residues 19–26; that stretch reads GHVDHGKT. 19–26 contacts GTP; sequence GHVDHGKT. Thr-26 contacts Mg(2+). The segment at 60 to 64 is G2; that stretch reads GITIS. Residues 81–84 form a G3 region; it reads DCPG. Residues 81-85 and 136-139 each bind GTP; these read DCPGH and NKAD. The G4 stretch occupies residues 136-139; that stretch reads NKAD. Positions 174–176 are G5; the sequence is SAL.

This sequence belongs to the TRAFAC class translation factor GTPase superfamily. Classic translation factor GTPase family. EF-Tu/EF-1A subfamily. As to quaternary structure, monomer.

The protein localises to the cytoplasm. It carries out the reaction GTP + H2O = GDP + phosphate + H(+). Its function is as follows. GTP hydrolase that promotes the GTP-dependent binding of aminoacyl-tRNA to the A-site of ribosomes during protein biosynthesis. The polypeptide is Elongation factor Tu (Vesicomyosocius okutanii subsp. Calyptogena okutanii (strain HA)).